We begin with the raw amino-acid sequence, 199 residues long: NAD(P)H dehydrogenase (quinone) (199 aa).

A Flavodoxin-like domain is found at 4–190 (VLVLYYSAYG…AGARYQGKTI (187 aa)). Residues 10-15 (SAYGHI) and 78-80 (TRF) each bind FMN. NAD(+) is bound at residue Y12. W98 serves as a coordination point for substrate. Residues 113-119 (STATQHG) and H134 contribute to the FMN site.

It belongs to the WrbA family. It depends on FMN as a cofactor.

It catalyses the reaction a quinone + NADH + H(+) = a quinol + NAD(+). It carries out the reaction a quinone + NADPH + H(+) = a quinol + NADP(+). In Rhodopseudomonas palustris (strain TIE-1), this protein is NAD(P)H dehydrogenase (quinone).